We begin with the raw amino-acid sequence, 54 residues long: UPF0391 membrane protein Rmet_0093 (54 aa).

2 consecutive transmembrane segments (helical) span residues 5–25 and 30–50; these read ALVF…GIAA and IAKI…VMGL.

Belongs to the UPF0391 family.

Its subcellular location is the cell membrane. This Cupriavidus metallidurans (strain ATCC 43123 / DSM 2839 / NBRC 102507 / CH34) (Ralstonia metallidurans) protein is UPF0391 membrane protein Rmet_0093.